Reading from the N-terminus, the 203-residue chain is High frequency lysogenization protein HflD homolog (203 aa).

This sequence belongs to the HflD family.

It is found in the cytoplasm. The protein localises to the cell inner membrane. This chain is High frequency lysogenization protein HflD homolog, found in Vesicomyosocius okutanii subsp. Calyptogena okutanii (strain HA).